Here is a 664-residue protein sequence, read N- to C-terminus: DNA ligase (664 aa).

NAD(+) contacts are provided by residues 32 to 36 (DKEYD) and 80 to 81 (SL). The active-site N6-AMP-lysine intermediate is the lysine 122. 3 residues coordinate NAD(+): arginine 144, glutamate 178, and lysine 314. Zn(2+) is bound by residues cysteine 407, cysteine 410, cysteine 423, and cysteine 429. Positions 587 to 664 (IDENPFMDKT…NEEEFSNKIK (78 aa)) constitute a BRCT domain.

This sequence belongs to the NAD-dependent DNA ligase family. LigA subfamily. Requires Mg(2+) as cofactor. The cofactor is Mn(2+).

It catalyses the reaction NAD(+) + (deoxyribonucleotide)n-3'-hydroxyl + 5'-phospho-(deoxyribonucleotide)m = (deoxyribonucleotide)n+m + AMP + beta-nicotinamide D-nucleotide.. Its function is as follows. DNA ligase that catalyzes the formation of phosphodiester linkages between 5'-phosphoryl and 3'-hydroxyl groups in double-stranded DNA using NAD as a coenzyme and as the energy source for the reaction. It is essential for DNA replication and repair of damaged DNA. The sequence is that of DNA ligase from Clostridium botulinum (strain Loch Maree / Type A3).